Consider the following 373-residue polypeptide: tRNA-specific 2-thiouridylase MnmA (373 aa).

Residues 12–19 and M38 contribute to the ATP site; that span reads GMSGGVDS. Residues 98–100 are interaction with target base in tRNA; the sequence is NPD. The active-site Nucleophile is C103. C103 and C200 are joined by a disulfide. ATP is bound at residue G127. Positions 150–152 are interaction with tRNA; that stretch reads KDQ. Residue C200 is the Cysteine persulfide intermediate of the active site. The segment at 312 to 313 is interaction with tRNA; sequence RY.

The protein belongs to the MnmA/TRMU family.

Its subcellular location is the cytoplasm. It carries out the reaction S-sulfanyl-L-cysteinyl-[protein] + uridine(34) in tRNA + AH2 + ATP = 2-thiouridine(34) in tRNA + L-cysteinyl-[protein] + A + AMP + diphosphate + H(+). In terms of biological role, catalyzes the 2-thiolation of uridine at the wobble position (U34) of tRNA, leading to the formation of s(2)U34. The chain is tRNA-specific 2-thiouridylase MnmA from Streptococcus agalactiae serotype III (strain NEM316).